The sequence spans 307 residues: Membrane protein insertase YidC 2 (307 aa).

The signal sequence occupies residues methionine 1–glycine 23. Cysteine 24 carries N-palmitoyl cysteine lipidation. Residue cysteine 24 is the site of S-diacylglycerol cysteine attachment. The next 5 membrane-spanning stretches (helical) occupy residues leucine 58–leucine 78, leucine 135–phenylalanine 155, valine 179–valine 199, threonine 209–leucine 225, and leucine 231–leucine 251. The disordered stretch occupies residues tyrosine 263 to arginine 307. The span at tyrosine 271 to glutamine 288 shows a compositional bias: polar residues. The segment covering lysine 293 to arginine 307 has biased composition (basic residues).

It belongs to the OXA1/ALB3/YidC family. Type 2 subfamily.

Its subcellular location is the cell membrane. Required for the insertion and/or proper folding and/or complex formation of integral membrane proteins into the membrane. Involved in integration of membrane proteins that insert both dependently and independently of the Sec translocase complex, as well as at least some lipoproteins. This is Membrane protein insertase YidC 2 from Streptococcus pyogenes serotype M3 (strain ATCC BAA-595 / MGAS315).